A 291-amino-acid chain; its full sequence is Nucleotide-binding protein RALTA_A0325 (291 aa).

8-15 contributes to the ATP binding site; that stretch reads GISGSGKS. 57 to 60 is a binding site for GTP; sequence DIRS.

Belongs to the RapZ-like family.

Functionally, displays ATPase and GTPase activities. This chain is Nucleotide-binding protein RALTA_A0325, found in Cupriavidus taiwanensis (strain DSM 17343 / BCRC 17206 / CCUG 44338 / CIP 107171 / LMG 19424 / R1) (Ralstonia taiwanensis (strain LMG 19424)).